The sequence spans 385 residues: Tryptophan--tRNA ligase (385 aa).

Positions 82 to 90 match the 'HIGH' region motif; that stretch reads PSGPMHIGH. A 'KMSKS' region motif is present at residues 253 to 257; sequence KMSAS.

It belongs to the class-I aminoacyl-tRNA synthetase family.

The protein resides in the cytoplasm. It catalyses the reaction tRNA(Trp) + L-tryptophan + ATP = L-tryptophyl-tRNA(Trp) + AMP + diphosphate + H(+). In Pyrococcus abyssi (strain GE5 / Orsay), this protein is Tryptophan--tRNA ligase.